The primary structure comprises 340 residues: Quinic acid degradation cluster protein x (340 aa).

Mg(2+) is bound by residues Glu90, Asp115, Leu117, Asp118, and Asp262. Glu90 lines the substrate pocket. Substrate is bound by residues 117-120 (LDGT) and Asp262.

Belongs to the inositol monophosphatase superfamily.

In terms of biological role, part of the qa gene cluster that mediates the catabolism of quinic acid (QA) and as such, allows the use of QA as a sole carbon source. Its function within the pathway has not been determined yet but it probably plays a regulatory role. The qa cluster encodes 3 inducible enymes (qa-2, qa-3 and qa-4) catalyzing the first three reactions in the catabolism of quinic acid to protocatechuic acid (also known as 3,4-Dihydroxybenzoic acid). The sequence is that of Quinic acid degradation cluster protein x from Neurospora crassa (strain ATCC 24698 / 74-OR23-1A / CBS 708.71 / DSM 1257 / FGSC 987).